The primary structure comprises 121 residues: UPF0295 protein ABC1323 (121 aa).

2 helical membrane-spanning segments follow: residues 14 to 34 and 41 to 61; these read TFALSLVFVGILIMYVGIFFK and VIAMILGFLAVIASTVVYFFI.

It belongs to the UPF0295 family.

The protein resides in the cell membrane. This is UPF0295 protein ABC1323 from Shouchella clausii (strain KSM-K16) (Alkalihalobacillus clausii).